Here is a 339-residue protein sequence, read N- to C-terminus: Sperm acrosome membrane-associated protein 6 (339 aa).

An N-terminal signal peptide occupies residues 1-41 (MTSQRSLSSPQTRRPSVMGLISLVGSIVLLFLLIFRASTWA). The short motif at 42 to 45 (CLFC) is the CXXC motif element. 6 cysteine pairs are disulfide-bonded: Cys-42–Cys-155, Cys-45–Cys-158, Cys-56–Cys-70, Cys-140–Cys-163, Cys-144–Cys-169, and Cys-186–Cys-241. The Extracellular portion of the chain corresponds to 42 to 310 (CLFCFTTYEE…NPQALTLGNL (269 aa)). Residues 155 to 158 (CSGC) carry the CXXC motif motif. The Ig-like domain occupies 166 to 251 (PLDCPVQDML…VILHDQRPLA (86 aa)). A glycan (N-linked (GlcNAc...) asparagine) is linked at Asn-258. Residues 311–331 (FLLAATAALGSASVTLLVWLF) traverse the membrane as a helical segment. At 332–339 (FRWYLSGN) the chain is on the cytoplasmic side.

Belongs to the SPACA6 family. Forms a complex with IZUMO1 and TMEM81 on spermatocyte cell membrane required for fertilization. As to expression, highly expressed in testis. Minor expression also detected in epididymis, seminal vesicle and ovary. Predominantly expressed in testicular germ cells during spermiogenesis. Most abundant in round spermatids and detected at lower levels in elongating spermatids.

The protein resides in the cytoplasmic vesicle. It is found in the secretory vesicle. It localises to the acrosome membrane. In terms of biological role, sperm protein required for fusion of sperm with the egg membrane during fertilization. May regulate the expression of sperm surface protein DCST2. This chain is Sperm acrosome membrane-associated protein 6, found in Mus musculus (Mouse).